The primary structure comprises 375 residues: Alcohol dehydrogenase 1 (375 aa).

An N-acetylalanine modification is found at alanine 1. Residues cysteine 46, histidine 68, cysteine 98, cysteine 101, cysteine 104, cysteine 112, and cysteine 175 each contribute to the Zn(2+) site. Residues 200 to 205, aspartate 224, lysine 229, 293 to 295, and arginine 370 each bind NAD(+); these read GLGGVG and VGL.

It belongs to the zinc-containing alcohol dehydrogenase family. Class-I subfamily. Requires Zn(2+) as cofactor.

The protein resides in the cytoplasm. The catalysed reaction is a primary alcohol + NAD(+) = an aldehyde + NADH + H(+). It catalyses the reaction a secondary alcohol + NAD(+) = a ketone + NADH + H(+). This is Alcohol dehydrogenase 1 from Pelophylax perezi (Perez's frog).